Consider the following 364-residue polypeptide: Chorismate synthase (364 aa).

Residues 41–60 (MQHDLDRRRPGTSRYTTARR) form a disordered region. NADP(+)-binding residues include Arg48 and Arg54. Residues 125 to 127 (RSS), 238 to 239 (NA), Gly278, 293 to 297 (KPTSS), and Arg319 contribute to the FMN site.

It belongs to the chorismate synthase family. Homotetramer. It depends on FMNH2 as a cofactor.

The enzyme catalyses 5-O-(1-carboxyvinyl)-3-phosphoshikimate = chorismate + phosphate. It functions in the pathway metabolic intermediate biosynthesis; chorismate biosynthesis; chorismate from D-erythrose 4-phosphate and phosphoenolpyruvate: step 7/7. Catalyzes the anti-1,4-elimination of the C-3 phosphate and the C-6 proR hydrogen from 5-enolpyruvylshikimate-3-phosphate (EPSP) to yield chorismate, which is the branch point compound that serves as the starting substrate for the three terminal pathways of aromatic amino acid biosynthesis. This reaction introduces a second double bond into the aromatic ring system. This Shewanella sp. (strain ANA-3) protein is Chorismate synthase.